We begin with the raw amino-acid sequence, 1161 residues long: DNA-directed RNA polymerase 132 kDa polypeptide (1161 aa).

It belongs to the RNA polymerase beta chain family. As to quaternary structure, the DNA-dependent RNA polymerase used for intermediate and late genes expression consists of eight subunits (147) kDa, (133) kDa, (35) kDa, (30) kDa, (22) kDa, (19) kDa, (18) kDa and (7) kDa totalling more than 500 kDa in mass. The same holoenzyme, with the addition of the transcription-specificity factor RAP94, is used for early gene expression.

The protein resides in the virion. The enzyme catalyses RNA(n) + a ribonucleoside 5'-triphosphate = RNA(n+1) + diphosphate. Functionally, part of the DNA-dependent RNA polymerase which catalyzes the transcription of viral DNA into RNA using the four ribonucleoside triphosphates as substrates. Responsible for the transcription of early, intermediate and late genes. DNA-dependent RNA polymerase associates with the early transcription factor (ETF), itself composed of D6 and A7, thereby allowing the early genes transcription. Late transcription, and probably also intermediate transcription, require newly synthesized RNA polymerase. This chain is DNA-directed RNA polymerase 132 kDa polypeptide (RPO132), found in Fowlpox virus (strain NVSL) (FPV).